Here is a 385-residue protein sequence, read N- to C-terminus: SWI/SNF-related matrix-associated actin-dependent regulator of chromatin subfamily B member 1 (385 aa).

The DNA-binding stretch occupies residues 1-113 (MMMMALSKTF…DEKYKAVSIS (113 aa)). Glycyl lysine isopeptide (Lys-Gly) (interchain with G-Cter in SUMO2) cross-links involve residues lysine 106, lysine 108, and lysine 124. A Phosphoserine modification is found at serine 129. A Glycyl lysine isopeptide (Lys-Gly) (interchain with G-Cter in SUMO2) cross-link involves residue lysine 161. The interval 183–243 (PEVLVPIRLD…VPAIASAIRQ (61 aa)) is HIV-1 integrase-binding. A run of 2 repeats spans residues 186 to 245 (LVPI…RQQI) and 259 to 319 (DQRV…RGQL). Residues 186–245 (LVPIRLDMEIDGQKLRDAFTWNMNEKLMTPEMFSEILCDDLDLNPLTFVPAIASAIRQQI) form an MYC-binding region. The tract at residues 186-319 (LVPIRLDMEI…TIAYSIRGQL (134 aa)) is 2 X approximate tandem repeats. The interval 304–318 (GGEFVTTIAYSIRGQ) is interaction with PPP1R15A.

The protein belongs to the SNF5 family. As to quaternary structure, component of the multiprotein chromatin-remodeling complexes SWI/SNF: SWI/SNF-A (BAF), SWI/SNF-B (PBAF) and related complexes. The canonical complex contains a catalytic subunit (either SMARCA4/BRG1/BAF190A or SMARCA2/BRM/BAF190B) and at least SMARCE1, ACTL6A/BAF53, SMARCC1/BAF155, SMARCC2/BAF170, and SMARCB1/SNF5/BAF47. Other subunits specific to each of the complexes may also be present permitting several possible combinations developmentally and tissue specific. Component of the BAF complex, which includes at least actin (ACTB), ARID1A/BAF250A, ARID1B/BAF250B, SMARCA2/BRM, SMARCA4/BRG1/BAF190A, ACTL6A/BAF53, ACTL6B/BAF53B, SMARCE1/BAF57 SMARCC1/BAF155, SMARCC2/BAF170, SMARCB1/SNF5/INI1, and one or more SMARCD1/BAF60A, SMARCD2/BAF60B, or SMARCD3/BAF60C. In muscle cells, the BAF complex also contains DPF3. Component of neural progenitors-specific chromatin remodeling complex (npBAF complex) composed of at least, ARID1A/BAF250A or ARID1B/BAF250B, SMARCD1/BAF60A, SMARCD3/BAF60C, SMARCA2/BRM/BAF190B, SMARCA4/BRG1/BAF190A, SMARCB1/BAF47, SMARCC1/BAF155, SMARCE1/BAF57, SMARCC2/BAF170, PHF10/BAF45A, ACTL6A/BAF53A and actin. Component of neuron-specific chromatin remodeling complex (nBAF complex) composed of at least, ARID1A/BAF250A or ARID1B/BAF250B, SMARCD1/BAF60A, SMARCD3/BAF60C, SMARCA2/BRM/BAF190B, SMARCA4/BRG1/BAF190A, SMARCB1/BAF47, SMARCC1/BAF155, SMARCE1/BAF57, SMARCC2/BAF170, DPF1/BAF45B, DPF3/BAF45C, ACTL6B/BAF53B and actin. Component of the SWI/SNF-B (PBAF) chromatin remodeling complex, at least composed of SMARCA4/BRG1, SMARCB1/BAF47/SNF5, ACTL6A/BAF53A or ACTL6B/BAF53B, SMARCE1/BAF57, SMARCD1/BAF60A, SMARCD2/BAF60B, perhaps SMARCD3/BAF60C, SMARCC1/BAF155, SMARCC2/BAF170, PBRM1/BAF180, ARID2/BAF200 and actin. Binds to double-stranded DNA. Interacts with CEBPB (when not methylated). Interacts with PIH1D1. Interacts with MYK and MAEL. Interacts with PPP1R15A. Interacts with DPF2. Interacts with YWHAZ. Interacts with ERCC6. Interacts with FOS, FOSB isoform 1 and 2, FOSL1 and FOSL2. In terms of assembly, (Microbial infection) Binds tightly to the human immunodeficiency virus-type 1 (HIV-1) integrase in vitro and stimulates its DNA-joining activity. Interacts with human papillomavirus 18 E1 protein to stimulate its viral replication. Interacts with Epstein-Barr virus protein EBNA-2.

The protein resides in the nucleus. Its function is as follows. Core component of the BAF (hSWI/SNF) complex. This ATP-dependent chromatin-remodeling complex plays important roles in cell proliferation and differentiation, in cellular antiviral activities and inhibition of tumor formation. The BAF complex is able to create a stable, altered form of chromatin that constrains fewer negative supercoils than normal. This change in supercoiling would be due to the conversion of up to one-half of the nucleosomes on polynucleosomal arrays into asymmetric structures, termed altosomes, each composed of 2 histones octamers. Stimulates in vitro the remodeling activity of SMARCA4/BRG1/BAF190A. Involved in activation of CSF1 promoter. Belongs to the neural progenitors-specific chromatin remodeling complex (npBAF complex) and the neuron-specific chromatin remodeling complex (nBAF complex). During neural development a switch from a stem/progenitor to a postmitotic chromatin remodeling mechanism occurs as neurons exit the cell cycle and become committed to their adult state. The transition from proliferating neural stem/progenitor cells to postmitotic neurons requires a switch in subunit composition of the npBAF and nBAF complexes. As neural progenitors exit mitosis and differentiate into neurons, npBAF complexes which contain ACTL6A/BAF53A and PHF10/BAF45A, are exchanged for homologous alternative ACTL6B/BAF53B and DPF1/BAF45B or DPF3/BAF45C subunits in neuron-specific complexes (nBAF). The npBAF complex is essential for the self-renewal/proliferative capacity of the multipotent neural stem cells. The nBAF complex along with CREST plays a role regulating the activity of genes essential for dendrite growth. Plays a key role in cell-cycle control and causes cell cycle arrest in G0/G1. This Homo sapiens (Human) protein is SWI/SNF-related matrix-associated actin-dependent regulator of chromatin subfamily B member 1 (SMARCB1).